Reading from the N-terminus, the 237-residue chain is Purine nucleoside phosphorylase DeoD-type (237 aa).

H4 contacts a purine D-ribonucleoside. Phosphate-binding positions include G20, R24, R43, and 87–90 (RVGT). A purine D-ribonucleoside-binding positions include 179-181 (EME) and 203-204 (SD). D204 serves as the catalytic Proton donor.

This sequence belongs to the PNP/UDP phosphorylase family. As to quaternary structure, homohexamer; trimer of homodimers.

It carries out the reaction a purine D-ribonucleoside + phosphate = a purine nucleobase + alpha-D-ribose 1-phosphate. The catalysed reaction is a purine 2'-deoxy-D-ribonucleoside + phosphate = a purine nucleobase + 2-deoxy-alpha-D-ribose 1-phosphate. Catalyzes the reversible phosphorolytic breakdown of the N-glycosidic bond in the beta-(deoxy)ribonucleoside molecules, with the formation of the corresponding free purine bases and pentose-1-phosphate. The polypeptide is Purine nucleoside phosphorylase DeoD-type (Streptococcus pyogenes serotype M12 (strain MGAS2096)).